We begin with the raw amino-acid sequence, 775 residues long: E3 ubiquitin-protein ligase ICP0 (775 aa).

Residues 1 to 112 are disordered; it reads MEPRPGASTR…PPREDGGSDE (112 aa). Basic and acidic residues-rich tracts occupy residues 10–21 and 45–57; these read RRPEGRPQREPA and VGGR…HDDD. The segment covering 58 to 69 has biased composition (acidic residues); it reads SASEADSTDTEL. Thr-67 bears the Phosphothreonine; by host; by CK1 mark. The RING-type zinc-finger motif lies at 116 to 157; that stretch reads CAVCTDEIAPHLRCDTFPCMHRFCIPCMKTWMQLRNTCPLCN. The tract at residues 221 to 636 is disordered; that stretch reads RALSPTHPEP…HAETSGAVPA (416 aa). The span at 231–243 shows a compositional bias: acidic residues; that stretch reads TTDEDDDDLDDAD. Residues 258 to 284 are compositionally biased toward low complexity; sequence RRGAAAPPVTGGASHAAPQPAAARTAP. Residues 293 to 302 show a composition bias toward polar residues; that stretch reads GSSNTNTTTN. The span at 310–321 shows a compositional bias: low complexity; that stretch reads RQSRAAAPRGAS. Residues 322 to 331 show a composition bias toward gly residues; sequence GPSGGVGVGV. Residues 369–390 are compositionally biased toward pro residues; the sequence is PASPHRPPAAPMPGSAPRPGPP. Over residues 391 to 409 the composition is skewed to low complexity; that stretch reads ASAAASGPARPRAAVAPCV. Residues 410–421 are compositionally biased toward pro residues; that stretch reads RAPPPGPGPRAP. Residues 422-431 show a composition bias toward low complexity; that stretch reads APGAEPAARP. Positions 439–453 are enriched in polar residues; sequence QSHSSLAQAANQEQS. Residues 464-476 are compositionally biased toward gly residues; the sequence is GSGGPGVEGGHGP. The segment covering 477-493 has biased composition (low complexity); sequence SRGAAPSGAAPLPSAAS. Over residues 509–519 the composition is skewed to polar residues; it reads GQENPSPQSTR. A compositionally biased stretch (gly residues) spans 539–549; the sequence is GPGGRGQGGPG. Over residues 550-592 the composition is skewed to low complexity; it reads TPLTSSAASASSSSASSSSAPTPAGAASSAAGAASSSASASSG. The segment covering 617–626 has biased composition (basic residues); that stretch reads GPRKCARKTR.

Belongs to the simplexviruses ICp0 family. Interacts directly with human RCOR1/CoREST protein, leading to the disruption of the human BHC corepressor complex. Interacts with human CENPA, leading to its degradation. Interacts with human USP7; this interaction modulates ICP0 stability. Interacts with human CDC34. Interacts (when phosphorylated) with human RNF8 (via FHA domain). Interacts with human TRIM27. Interacts with human ZBP1. Interacts with host MORC3; this interaction promotes the degradation of host MORC3. In terms of processing, phosphorylated at Thr-67, leading to promote interaction with host RNF8. Phosphorylated by host CHEK2; leading to increased SUMO-targeted ubiquitin ligase activity of ICP0. Post-translationally, auto-ubiquitinated. Deubiquitinated by host USP7; leading to stabilize it.

The protein resides in the host cytoplasm. Its subcellular location is the host nucleus. The catalysed reaction is S-ubiquitinyl-[E2 ubiquitin-conjugating enzyme]-L-cysteine + [acceptor protein]-L-lysine = [E2 ubiquitin-conjugating enzyme]-L-cysteine + N(6)-ubiquitinyl-[acceptor protein]-L-lysine.. SUMO-targeted ubiquitin ligase that plays an essential role in nuclear antiviral defense evasion triggered by dsDNA viruses. Acts during the initial stages of lytic infection and the reactivation of latent viral genome. Prevents the antiviral effect of nuclear bodies by degrading host PML, SP100 and MORC3. Prevents antiviral response to viral DNA induced by IFI16 by degrading it. Additionally, inhibits host IRF3 nuclear signaling to prevent interferon production by the infected cells. Interestingly, the E3 ubiquitin ligase activity associated with the RING finger domain does not seem to be directly required to inhibit the activation of IRF3 but instead plays a critical role in modulating the cellular localization of ICP0. Upon reactivation of latent genome, suppresses the silencing of viral DNA by dissociating either HDAC1 or HDAC2 from the HDAC-RCOR1-REST-KDM1A complex localized at the ND10 structures and causes their dispersal. Two cellular histone ubiquitin ligases RNF8 and RNF168 are also targeted by ICP0 for degradation, leading to a loss of ubiquitinated forms of H2A, a relief of transcriptional repression, and the activation of latent viral genomes. Enhances the localization of host CCND3 to ND10 bodies that serve as precursors of replication compartments to enable efficient viral replication. Like many RING-finger E3 ubiquitin ligases, ICP0 can induce its own ubiquitination, an activity that promotes its instability due to its targeting to the 26S proteasome for degradation. ICP0 restricts this process by recruiting the cellular ubiquitin-specific protease USP7 that cleaves the anchored ubiquitin chains from ICP0, thereby promoting its stabilization. The chain is E3 ubiquitin-protein ligase ICP0 (ICP0) from Homo sapiens (Human).